We begin with the raw amino-acid sequence, 305 residues long: Carbamate kinase (305 aa).

This sequence belongs to the carbamate kinase family.

The protein resides in the cytoplasm. The enzyme catalyses hydrogencarbonate + NH4(+) + ATP = carbamoyl phosphate + ADP + H2O + H(+). Its pathway is metabolic intermediate metabolism; carbamoyl phosphate degradation; CO(2) and NH(3) from carbamoyl phosphate: step 1/1. This is Carbamate kinase (arcC) from Thermoplasma volcanium (strain ATCC 51530 / DSM 4299 / JCM 9571 / NBRC 15438 / GSS1).